The sequence spans 89 residues: Mu-theraphotoxin-Phlo1a (89 aa).

Positions M1 to A22 are cleaved as a signal peptide. A propeptide spanning residues E23–R52 is cleaved from the precursor. 3 disulfides stabilise this stretch: C54–C68, C61–C73, and C67–C81. I87 carries the post-translational modification Isoleucine amide.

Belongs to the neurotoxin 10 (Hwtx-1) family. 39 (Jztx-34) subfamily. As to expression, expressed by the venom gland.

The protein localises to the secreted. Gating-modifier toxin that inhibits voltage-gated sodium channel Nav by shifting the threshold for channel activation to more positive potentials. This toxin moderately inhibits human Nav1.7/SCN9A (IC(50)=459 nM) and weakly inhibits hNav1.2/SCN2A and hNav1.5/SCN5A (&lt;20% inhibition at 1 uM peptide). Inhibition of Nav1.7 is voltage-dependent, with lower inhibition at more positive test pulses. In Phlogius sp. (Tarantula spider), this protein is Mu-theraphotoxin-Phlo1a.